Here is a 772-residue protein sequence, read N- to C-terminus: Larval serum protein 1 gamma chain (772 aa).

Positions 1-16 (MKLTLVILALVACVTA) are cleaved as a signal peptide. N-linked (GlcNAc...) asparagine glycosylation occurs at Asn-242.

It belongs to the hemocyanin family. In terms of assembly, heterohexamer, composed of three subunits, alpha, beta and gamma. In terms of tissue distribution, larval hemolymph.

The protein resides in the secreted. Its subcellular location is the extracellular space. Functionally, larval storage protein (LSP) which may serve as a store of amino acids for synthesis of adult proteins. The sequence is that of Larval serum protein 1 gamma chain (Lsp1gamma) from Drosophila melanogaster (Fruit fly).